A 239-amino-acid polypeptide reads, in one-letter code: Probable transcriptional regulatory protein VC_A0006 (239 aa).

The protein belongs to the TACO1 family.

The protein resides in the cytoplasm. The protein is Probable transcriptional regulatory protein VC_A0006 of Vibrio cholerae serotype O1 (strain ATCC 39315 / El Tor Inaba N16961).